The primary structure comprises 291 residues: Transmembrane O-methyltransferase (291 aa).

Residues 31 to 51 form a helical membrane-spanning segment; sequence VGTMSPAIALAFLPLVVTLLV. S-adenosyl-L-methionine-binding positions include E137, 139–140, S145, E163, and S193; that span reads GT.

Belongs to the class I-like SAM-binding methyltransferase superfamily. Cation-dependent O-methyltransferase family. In terms of assembly, interacts with LHFPL5, PCDH15, TMC1, TMC2 and TMIE. Interacts directly with TMC1. The interaction of TOMT with TMC1 and TMC2 is required for the transportation of TMC1/2 into the stereocilia of hair cells.

Its subcellular location is the membrane. It is found in the cytoplasm. The protein localises to the endoplasmic reticulum. The catalysed reaction is a catechol + S-adenosyl-L-methionine = a guaiacol + S-adenosyl-L-homocysteine + H(+). Functionally, catalyzes the O-methylation, and thereby the inactivation, of catecholamine neurotransmitters and catechol hormones. Required for auditory function. Component of the cochlear hair cell's mechanotransduction (MET) machinery. Involved in the assembly of the asymmetric tip-link MET complex. Required for transportation of TMC1 and TMC2 proteins into the mechanically sensitive stereocilia of the hair cells. The function in MET is independent of the enzymatic activity. This chain is Transmembrane O-methyltransferase, found in Pan troglodytes (Chimpanzee).